The following is a 117-amino-acid chain: Ig heavy chain V region J558 (117 aa).

Positions Glu1–Ser116 constitute an Ig-like domain. Cysteines 22 and 96 form a disulfide.

The polypeptide is Ig heavy chain V region J558 (Mus musculus (Mouse)).